Reading from the N-terminus, the 419-residue chain is N-acylglucosamine 2-epimerase (419 aa).

The leucine-zipper stretch occupies residues 185–206 (LLSLVEQLGEEDEELTNMYAEL). Residue S418 is modified to Phosphoserine.

The protein belongs to the N-acylglucosamine 2-epimerase family. As to quaternary structure, homodimer. Forms a heterodimer with renin and inhibits its activity.

It catalyses the reaction an N-acyl-D-glucosamine = an N-acyl-D-mannosamine. It participates in amino-sugar metabolism; N-acetylneuraminate degradation. In terms of biological role, catalyzes the interconversion of N-acetylglucosamine to N-acetylmannosamine. Involved in the N-glycolylneuraminic acid (Neu5Gc) degradation pathway. The chain is N-acylglucosamine 2-epimerase (Renbp) from Mus musculus (Mouse).